The chain runs to 189 residues: Crossover junction endodeoxyribonuclease RuvC (189 aa).

Residues Asp-11, Glu-71, and Asp-143 contribute to the active site. Residues Asp-11, Glu-71, and Asp-143 each coordinate Mg(2+).

It belongs to the RuvC family. In terms of assembly, homodimer which binds Holliday junction (HJ) DNA. The HJ becomes 2-fold symmetrical on binding to RuvC with unstacked arms; it has a different conformation from HJ DNA in complex with RuvA. In the full resolvosome a probable DNA-RuvA(4)-RuvB(12)-RuvC(2) complex forms which resolves the HJ. Mg(2+) is required as a cofactor.

It localises to the cytoplasm. The enzyme catalyses Endonucleolytic cleavage at a junction such as a reciprocal single-stranded crossover between two homologous DNA duplexes (Holliday junction).. The RuvA-RuvB-RuvC complex processes Holliday junction (HJ) DNA during genetic recombination and DNA repair. Endonuclease that resolves HJ intermediates. Cleaves cruciform DNA by making single-stranded nicks across the HJ at symmetrical positions within the homologous arms, yielding a 5'-phosphate and a 3'-hydroxyl group; requires a central core of homology in the junction. The consensus cleavage sequence is 5'-(A/T)TT(C/G)-3'. Cleavage occurs on the 3'-side of the TT dinucleotide at the point of strand exchange. HJ branch migration catalyzed by RuvA-RuvB allows RuvC to scan DNA until it finds its consensus sequence, where it cleaves and resolves the cruciform DNA. This Methylorubrum extorquens (strain CM4 / NCIMB 13688) (Methylobacterium extorquens) protein is Crossover junction endodeoxyribonuclease RuvC.